The primary structure comprises 607 residues: Elongation factor 4 (607 aa).

Positions 6–188 (SRIRNFSIIA…AIVARIPPPR (183 aa)) constitute a tr-type G domain. GTP is bound by residues 18–23 (DHGKST) and 135–138 (NKID).

This sequence belongs to the TRAFAC class translation factor GTPase superfamily. Classic translation factor GTPase family. LepA subfamily.

It is found in the cell inner membrane. It catalyses the reaction GTP + H2O = GDP + phosphate + H(+). Its function is as follows. Required for accurate and efficient protein synthesis under certain stress conditions. May act as a fidelity factor of the translation reaction, by catalyzing a one-codon backward translocation of tRNAs on improperly translocated ribosomes. Back-translocation proceeds from a post-translocation (POST) complex to a pre-translocation (PRE) complex, thus giving elongation factor G a second chance to translocate the tRNAs correctly. Binds to ribosomes in a GTP-dependent manner. This is Elongation factor 4 from Sphingopyxis alaskensis (strain DSM 13593 / LMG 18877 / RB2256) (Sphingomonas alaskensis).